The following is a 132-amino-acid chain: D-ribose pyranase (132 aa).

Residue histidine 20 is the Proton donor of the active site. Residues aspartate 28, histidine 99, and 121–123 each bind substrate; that span reads YSN.

It belongs to the RbsD / FucU family. RbsD subfamily. In terms of assembly, homodecamer.

The protein localises to the cytoplasm. It carries out the reaction beta-D-ribopyranose = beta-D-ribofuranose. The protein operates within carbohydrate metabolism; D-ribose degradation; D-ribose 5-phosphate from beta-D-ribopyranose: step 1/2. Functionally, catalyzes the interconversion of beta-pyran and beta-furan forms of D-ribose. The polypeptide is D-ribose pyranase (Streptococcus agalactiae serotype Ia (strain ATCC 27591 / A909 / CDC SS700)).